The chain runs to 112 residues: UPF0235 protein Atu2660 (112 aa).

It belongs to the UPF0235 family.

The polypeptide is UPF0235 protein Atu2660 (Agrobacterium fabrum (strain C58 / ATCC 33970) (Agrobacterium tumefaciens (strain C58))).